We begin with the raw amino-acid sequence, 238 residues long: 15,16-dihydrobiliverdin:ferredoxin oxidoreductase (238 aa).

This sequence belongs to the HY2 family.

It carries out the reaction 15,16-dihydrobiliverdin + oxidized 2[4Fe-4S]-[ferredoxin] = biliverdin IXalpha + reduced 2[4Fe-4S]-[ferredoxin] + 2 H(+). In terms of biological role, catalyzes the two-electron reduction of biliverdin IX-alpha at the C15 methine bridge. This Prochlorococcus marinus (strain NATL1A) protein is 15,16-dihydrobiliverdin:ferredoxin oxidoreductase.